Reading from the N-terminus, the 116-residue chain is Ribosome-binding factor A (116 aa).

It belongs to the RbfA family. Monomer. Binds 30S ribosomal subunits, but not 50S ribosomal subunits or 70S ribosomes.

The protein resides in the cytoplasm. Its function is as follows. One of several proteins that assist in the late maturation steps of the functional core of the 30S ribosomal subunit. Associates with free 30S ribosomal subunits (but not with 30S subunits that are part of 70S ribosomes or polysomes). Required for efficient processing of 16S rRNA. May interact with the 5'-terminal helix region of 16S rRNA. The protein is Ribosome-binding factor A of Streptococcus pneumoniae (strain ATCC BAA-255 / R6).